The sequence spans 338 residues: Elongation factor Ts, mitochondrial (338 aa).

The transit peptide at 1–42 directs the protein to the mitochondrion; the sequence is MSPSIAMFTLTPNARALASKTSKMDLIKNLRERTGAPIVDVK.

The protein belongs to the EF-Ts family.

The protein resides in the mitochondrion. Associates with the EF-Tu.GDP complex and induces the exchange of GDP to GTP. It remains bound to the aminoacyl-tRNA.EF-Tu.GTP complex up to the GTP hydrolysis stage on the ribosome. This chain is Elongation factor Ts, mitochondrial, found in Ostreococcus tauri.